We begin with the raw amino-acid sequence, 312 residues long: uncharacterized protein (312 aa).

The next 2 helical transmembrane spans lie at 4–24 (AIYL…TYAE) and 286–306 (YLLS…AIYL).

Its subcellular location is the cell membrane. This is an uncharacterized protein from Methanocaldococcus jannaschii (strain ATCC 43067 / DSM 2661 / JAL-1 / JCM 10045 / NBRC 100440) (Methanococcus jannaschii).